Here is a 359-residue protein sequence, read N- to C-terminus: Probable E3 ubiquitin-protein ligase LUL4 (359 aa).

Positions 1 to 35 are disordered; it reads MGISFSNNNRRRDNNNRRHLHHYPPPPPYYYLDPP. Gly-2 is lipidated: N-myristoyl glycine. Residues 23–35 are compositionally biased toward pro residues; sequence YPPPPPYYYLDPP. Residues 148 to 267 form a DAR2 domain region; that stretch reads FVFDALFDGS…GSFKVKVVKQ (120 aa). Residues 302 to 341 form an RING-type zinc finger; that stretch reads CVICMTEAKDTAVLPCRHLCMCSDCAKELRLQSNKCPICR.

Belongs to the RING-type zinc finger family. LOG2 subfamily.

It catalyses the reaction S-ubiquitinyl-[E2 ubiquitin-conjugating enzyme]-L-cysteine + [acceptor protein]-L-lysine = [E2 ubiquitin-conjugating enzyme]-L-cysteine + N(6)-ubiquitinyl-[acceptor protein]-L-lysine.. It functions in the pathway protein modification; protein ubiquitination. Its function is as follows. Acts as an E3 ubiquitin-protein ligase, or as part of E3 complex, which accepts ubiquitin from specific E2 ubiquitin-conjugating enzymes and then transfers it to substrates (in vitro). The sequence is that of Probable E3 ubiquitin-protein ligase LUL4 (LUL4) from Arabidopsis thaliana (Mouse-ear cress).